Consider the following 289-residue polypeptide: tRNA-cytidine(32) 2-sulfurtransferase (289 aa).

Residues S39–S44 carry the PP-loop motif motif. The [4Fe-4S] cluster site is built by C114, C117, and C205.

It belongs to the TtcA family. As to quaternary structure, homodimer. Mg(2+) serves as cofactor. The cofactor is [4Fe-4S] cluster.

It localises to the cytoplasm. It carries out the reaction cytidine(32) in tRNA + S-sulfanyl-L-cysteinyl-[cysteine desulfurase] + AH2 + ATP = 2-thiocytidine(32) in tRNA + L-cysteinyl-[cysteine desulfurase] + A + AMP + diphosphate + H(+). Its pathway is tRNA modification. Catalyzes the ATP-dependent 2-thiolation of cytidine in position 32 of tRNA, to form 2-thiocytidine (s(2)C32). The sulfur atoms are provided by the cysteine/cysteine desulfurase (IscS) system. The chain is tRNA-cytidine(32) 2-sulfurtransferase from Deinococcus geothermalis (strain DSM 11300 / CIP 105573 / AG-3a).